A 137-amino-acid polypeptide reads, in one-letter code: Aspartate 1-decarboxylase (137 aa).

Catalysis depends on Ser25, which acts as the Schiff-base intermediate with substrate; via pyruvic acid. Ser25 carries the post-translational modification Pyruvic acid (Ser). A substrate-binding site is contributed by Thr57. Tyr58 acts as the Proton donor in catalysis. Residue 73–75 (GAA) coordinates substrate.

Belongs to the PanD family. Heterooctamer of four alpha and four beta subunits. Pyruvate serves as cofactor. Post-translationally, is synthesized initially as an inactive proenzyme, which is activated by self-cleavage at a specific serine bond to produce a beta-subunit with a hydroxyl group at its C-terminus and an alpha-subunit with a pyruvoyl group at its N-terminus.

The protein localises to the cytoplasm. It catalyses the reaction L-aspartate + H(+) = beta-alanine + CO2. It participates in cofactor biosynthesis; (R)-pantothenate biosynthesis; beta-alanine from L-aspartate: step 1/1. In terms of biological role, catalyzes the pyruvoyl-dependent decarboxylation of aspartate to produce beta-alanine. The protein is Aspartate 1-decarboxylase of Thermobifida fusca (strain YX).